Reading from the N-terminus, the 161-residue chain is DNA-binding protein inhibitor ID-4 (161 aa).

The bHLH domain occupies 52–104 (AAEAAADEPALCLQCDMNDCYSRLRRLVPTIPPNKKVSKVEILQHVIDYILDL). Positions 117 to 126 (QPPPPAPPHH) are enriched in pro residues. Residues 117–161 (QPPPPAPPHHPAGTCPAAPPRTPLTALNTDPAGAVNKQGDSILCR) are disordered.

As to quaternary structure, heterodimer with other HLH proteins.

The protein resides in the nucleus. Its function is as follows. Transcriptional regulator (lacking a basic DNA binding domain) which negatively regulates the basic helix-loop-helix (bHLH) transcription factors by forming heterodimers and inhibiting their DNA binding and transcriptional activity. Implicated in regulating a variety of cellular processes, including cellular growth, senescence, differentiation, apoptosis, angiogenesis, and neoplastic transformation. This is DNA-binding protein inhibitor ID-4 (ID4) from Homo sapiens (Human).